The sequence spans 470 residues: Aldehyde dehydrogenase family 3 comG (470 aa).

Residue 196–201 coordinates NAD(+); that stretch reads GSVKVG. Active-site residues include Glu218 and Cys252.

Belongs to the aldehyde dehydrogenase family.

Its subcellular location is the cytoplasm. The enzyme catalyses an aldehyde + NADP(+) + H2O = a carboxylate + NADPH + 2 H(+). It catalyses the reaction an aldehyde + NAD(+) + H2O = a carboxylate + NADH + 2 H(+). This is Aldehyde dehydrogenase family 3 comG (comG) from Dictyostelium discoideum (Social amoeba).